The chain runs to 908 residues: DNA mismatch repair protein MutS (908 aa).

662-669 (GPNMGGKS) lines the ATP pocket.

The protein belongs to the DNA mismatch repair MutS family.

In terms of biological role, this protein is involved in the repair of mismatches in DNA. It is possible that it carries out the mismatch recognition step. This protein has a weak ATPase activity. The sequence is that of DNA mismatch repair protein MutS from Rhizobium johnstonii (strain DSM 114642 / LMG 32736 / 3841) (Rhizobium leguminosarum bv. viciae).